Here is a 190-residue protein sequence, read N- to C-terminus: Ubiquinol-cytochrome c reductase iron-sulfur subunit (190 aa).

Residues 18-39 (FLYYATAGAGTVAAGAAAWTLV) form a helical membrane-spanning segment. In terms of domain architecture, Rieske spans 95–188 (GQLIDRSAQN…AEFLDDTTIK (94 aa)). [2Fe-2S] cluster-binding residues include Cys-132, His-134, Cys-152, and His-155. A disulfide bridge connects residues Cys-137 and Cys-154.

This sequence belongs to the Rieske iron-sulfur protein family. The main subunits of complex b-c1 are: cytochrome b, cytochrome c1 and the Rieske protein. Requires [2Fe-2S] cluster as cofactor.

Its subcellular location is the cell membrane. It carries out the reaction a quinol + 2 Fe(III)-[cytochrome c](out) = a quinone + 2 Fe(II)-[cytochrome c](out) + 2 H(+)(out). In terms of biological role, component of the ubiquinol-cytochrome c reductase complex (complex III or cytochrome b-c1 complex), which is a respiratory chain that generates an electrochemical potential coupled to ATP synthesis. The protein is Ubiquinol-cytochrome c reductase iron-sulfur subunit (petA) of Paracoccus denitrificans.